The following is a 178-amino-acid chain: ATP synthase subunit delta (178 aa).

It belongs to the ATPase delta chain family. In terms of assembly, F-type ATPases have 2 components, F(1) - the catalytic core - and F(0) - the membrane proton channel. F(1) has five subunits: alpha(3), beta(3), gamma(1), delta(1), epsilon(1). F(0) has three main subunits: a(1), b(2) and c(10-14). The alpha and beta chains form an alternating ring which encloses part of the gamma chain. F(1) is attached to F(0) by a central stalk formed by the gamma and epsilon chains, while a peripheral stalk is formed by the delta and b chains.

The protein resides in the cell membrane. Its function is as follows. F(1)F(0) ATP synthase produces ATP from ADP in the presence of a proton or sodium gradient. F-type ATPases consist of two structural domains, F(1) containing the extramembraneous catalytic core and F(0) containing the membrane proton channel, linked together by a central stalk and a peripheral stalk. During catalysis, ATP synthesis in the catalytic domain of F(1) is coupled via a rotary mechanism of the central stalk subunits to proton translocation. This protein is part of the stalk that links CF(0) to CF(1). It either transmits conformational changes from CF(0) to CF(1) or is implicated in proton conduction. This is ATP synthase subunit delta from Streptococcus gordonii (strain Challis / ATCC 35105 / BCRC 15272 / CH1 / DL1 / V288).